Consider the following 297-residue polypeptide: Probable endonuclease 4 (297 aa).

Positions 69, 110, 145, 179, 182, 214, 227, 229, and 259 each coordinate Zn(2+).

The protein belongs to the AP endonuclease 2 family. It depends on Zn(2+) as a cofactor.

The enzyme catalyses Endonucleolytic cleavage to 5'-phosphooligonucleotide end-products.. Endonuclease IV plays a role in DNA repair. It cleaves phosphodiester bonds at apurinic or apyrimidinic (AP) sites, generating a 3'-hydroxyl group and a 5'-terminal sugar phosphate. This is Probable endonuclease 4 from Bacillus velezensis (strain DSM 23117 / BGSC 10A6 / LMG 26770 / FZB42) (Bacillus amyloliquefaciens subsp. plantarum).